A 507-amino-acid chain; its full sequence is MEEFKRYLELDRSQQHDFIYPLIFQEYIYALARGRVLNGSIFFENAGYDNKSSLLIVKRLITHLITQMYQQNHFLFYTNDFNPNKFLGCNTNLYYQMIFEGFAVVVEIPFYLRLVSFLEGKERVKSHNLRSLHSIFPFLEDKFSHLNSLLDILIPHPVHLEILVQTLRYWVKDPSSLHLLRFFLHEYPNWNSLMTPKKFSFYFSKRNQRFFFFLYNFHVCEYESIFVFLRNQSSHLCSISSEIFLERISFYKKIELEEVFTKNFKAFLWAFKDPFLHYVRYRGKSFLASKDXXLLMNKWKYYLVNFWECYFSIWSQPRRIHINQLSNNCVDFLGYLLSVRLKPSMVRSQMIENSFLIENASKQFDTLVPITLLIRYLSKAKFCNVLGHPMSKPVWAALSDSDIIERFGRIYRNLSHYHSGSLKKISLYRIKYILRLSCARTLARKHKSTVRSFLKRLGMGLLEEFFTEEEQVFYLTFPKASSTSGKLYQGRIWYLDIFCINDPANHE.

It belongs to the intron maturase 2 family. MatK subfamily.

The protein resides in the plastid. Its subcellular location is the chloroplast. Its function is as follows. Usually encoded in the trnK tRNA gene intron. Probably assists in splicing its own and other chloroplast group II introns. This is Maturase K from Lyonia lucida (Fetterbush).